A 239-amino-acid chain; its full sequence is Exosome complex exonuclease RRP46 homolog (239 aa).

M1 bears the N-acetylmethionine mark.

It belongs to the RNase PH family. As to quaternary structure, probable component of the RNA exosome complex.

It localises to the nucleus. The protein resides in the nucleolus. Its function is as follows. Probable component of the exosome 3'-&gt;5' exoribonuclease complex, a complex that degrades inherently unstable mRNAs containing AU-rich elements (AREs) within their 3'-untranslated regions. This is Exosome complex exonuclease RRP46 homolog from Arabidopsis thaliana (Mouse-ear cress).